We begin with the raw amino-acid sequence, 336 residues long: DNA-directed RNA polymerase subunit alpha (336 aa).

Residues 1 to 232 (MIQKNWQELI…DQLGVFVNFD (232 aa)) are alpha N-terminal domain (alpha-NTD). The interval 248 to 336 (FNPALLKKVD…DLAKRYEDQY (89 aa)) is alpha C-terminal domain (alpha-CTD).

Belongs to the RNA polymerase alpha chain family. Homodimer. The RNAP catalytic core consists of 2 alpha, 1 beta, 1 beta' and 1 omega subunit. When a sigma factor is associated with the core the holoenzyme is formed, which can initiate transcription.

The catalysed reaction is RNA(n) + a ribonucleoside 5'-triphosphate = RNA(n+1) + diphosphate. In terms of biological role, DNA-dependent RNA polymerase catalyzes the transcription of DNA into RNA using the four ribonucleoside triphosphates as substrates. The sequence is that of DNA-directed RNA polymerase subunit alpha from Rhizobium radiobacter (Agrobacterium tumefaciens).